The sequence spans 736 residues: Meiotic expression up-regulated protein 27 (736 aa).

This sequence belongs to the UPF0300 family.

The polypeptide is Meiotic expression up-regulated protein 27 (meu27) (Schizosaccharomyces pombe (strain 972 / ATCC 24843) (Fission yeast)).